We begin with the raw amino-acid sequence, 3034 residues long: Cadherin EGF LAG seven-pass G-type receptor 1 (3034 aa).

A signal peptide spans 1–29 (MAPSSPRVLPALVLLAAAALPALELGAAA). At 30–2484 (WELRVPGGAR…REHGEVLPLK (2455 aa)) the chain is on the extracellular side. Over residues 222 to 243 (GTPSESPSVSPSLLNLSQPRAG) the composition is skewed to low complexity. Positions 222-267 (GTPSESPSVSPSLLNLSQPRAGVVRRSRRGTGSSTSPQFPLPSYQV) are disordered. Asparagine 236 carries an N-linked (GlcNAc...) asparagine glycan. Cadherin domains are found at residues 261–368 (PLPS…SPVF), 369–474 (EQSE…YPQF), 475–580 (SEKR…APIF), 581–702 (VSSP…DPMF), 703–804 (TQPV…RPVF), 805–907 (QSSH…APRF), 908–1014 (LRDF…PPVF), 1015–1116 (EKDE…PPEL), and 1121–1239 (ILFN…SPLL). Asparagine 561, asparagine 649, and asparagine 793 each carry an N-linked (GlcNAc...) asparagine glycan. 6 N-linked (GlcNAc...) asparagine glycosylation sites follow: asparagine 1129, asparagine 1154, asparagine 1228, asparagine 1264, asparagine 1274, and asparagine 1302. Positions 1318–1376 (DDNICLREPCENYMKCVSVLRFDSSAPFISSTTVLFRPIHPITGLRCRCPPGFTGDYCE) constitute an EGF-like 1; calcium-binding domain. 9 disulfides stabilise this stretch: cysteine 1322–cysteine 1333, cysteine 1327–cysteine 1364, cysteine 1366–cysteine 1375, cysteine 1382–cysteine 1393, cysteine 1387–cysteine 1402, cysteine 1404–cysteine 1413, cysteine 1422–cysteine 1433, cysteine 1427–cysteine 1443, and cysteine 1445–cysteine 1455. The region spanning 1378-1414 (EIDLCYSNPCGANGRCRSREGGYTCECFEDFTGEHCQ) is the EGF-like 2; calcium-binding domain. The region spanning 1418 to 1456 (RSGRCASGVCKNGGTCVNLLIGGFHCVCPPGEYEHPYCE) is the EGF-like 3; calcium-binding domain. The Laminin G-like 1 domain maps to 1457–1661 (VSTRSFPPQS…IANNGTRAGC (205 aa)). 3 N-linked (GlcNAc...) asparagine glycosylation sites follow: asparagine 1591, asparagine 1638, and asparagine 1655. Disulfide bonds link cysteine 1635–cysteine 1661, cysteine 1668–cysteine 1679, cysteine 1673–cysteine 1688, cysteine 1690–cysteine 1699, cysteine 1855–cysteine 1885, cysteine 1891–cysteine 1902, cysteine 1896–cysteine 1911, cysteine 1913–cysteine 1922, cysteine 1926–cysteine 1937, cysteine 1931–cysteine 1949, cysteine 1951–cysteine 1960, cysteine 1968–cysteine 1981, and cysteine 1983–cysteine 1993. An EGF-like 4; calcium-binding domain is found at 1664 to 1700 (QRNFCDGTSCQNGGTCVNRWNTYLCECPLRFGGKNCE). Position 1681 is a (3R)-3-hydroxyasparagine (asparagine 1681). A Laminin G-like 2 domain is found at 1704–1885 (PHPQRFTGES…ALKVRVKDGC (182 aa)). Residues 1887-1922 (VEDPCASSPCPPHSHCRDTWDSYSCICDRGYFGKKC) form the EGF-like 5; calcium-binding domain. Position 1904 is a (3R)-3-hydroxyaspartate (aspartate 1904). In terms of domain architecture, EGF-like 6; calcium-binding spans 1923-1961 (VDACLLNPCKHVAACVRSPNTPRGYSCECGPGHYGQYCE). An EGF-like 7; calcium-binding domain is found at 1962 to 1994 (NKVDLPCPKGWWGNPVCGPCHCAVSQGFDPDCN). Asparagine 1994 carries an N-linked (GlcNAc...) asparagine glycan. The region spanning 1996–2031 (TNGQCQCKENYYKPPAQDACLPCDCFPHGSHSRACD) is the EGF-like 8; calcium-binding domain. Intrachain disulfides connect cysteine 2000-cysteine 2015, cysteine 2002-cysteine 2018, cysteine 2020-cysteine 2030, cysteine 2039-cysteine 2048, and cysteine 2051-cysteine 2063. One can recognise a Laminin EGF-like domain in the interval 2018-2065 (CDCFPHGSHSRACDMDTGQCACKPGVIGRQCNRCDNPFAEVTSLGCEV). 6 N-linked (GlcNAc...) asparagine glycosylation sites follow: asparagine 2118, asparagine 2137, asparagine 2144, asparagine 2155, asparagine 2160, and asparagine 2272. A disordered region spans residues 2295–2346 (SVSFPADTFKPPEKKEGPVVRLTNRRTTPLTAQPEPRAERETSSSRRRRHPD). The region spanning 2312–2476 (PVVRLTNRRT…AVLMDISRRE (165 aa)) is the GAIN-B domain. 2 cysteine pairs are disulfide-bonded: cysteine 2426-cysteine 2458 and cysteine 2446-cysteine 2460. Residues 2426–2476 (CVFWNHSLDTGGTGGWSAKGCELLSRNRTHVTCQCSHSASCAVLMDISRRE) form a GPS region. N-linked (GlcNAc...) asparagine glycans are attached at residues asparagine 2430 and asparagine 2452. Residues 2485 to 2505 (IITYAALSLSLVALLVAFVLL) traverse the membrane as a helical segment. At 2506–2516 (SLVRTLRSNLH) the chain is on the cytoplasmic side. The chain crosses the membrane as a helical span at residues 2517 to 2537 (SIHKNLITALFFSQLIFMVGI). N-linked (GlcNAc...) asparagine glycosylation is present at asparagine 2538. Residues 2538–2542 (NQTEN) are Extracellular-facing. A helical membrane pass occupies residues 2543–2563 (PFLCTVVAILLHYVSMGTFAW). The Cytoplasmic portion of the chain corresponds to 2564–2587 (TLVENLHVYRMLTEVRNIDTGPMR). Residues 2588 to 2608 (FYHVVGWGIPAIVTGLAVGLD) traverse the membrane as a helical segment. Topologically, residues 2609–2625 (PQGYGNPDFCWLSLQDT) are extracellular. Residues 2626–2646 (LIWSFAGPVGTVIIINTVIFV) traverse the membrane as a helical segment. Residues 2647–2670 (LSAKVSCQRKHHYYERKGVVSMLR) lie on the Cytoplasmic side of the membrane. Residues 2671-2691 (TAFLLLLLVTATWLLGLLAVN) form a helical membrane-spanning segment. The Extracellular segment spans residues 2692 to 2694 (SDT). The chain crosses the membrane as a helical span at residues 2695–2715 (LSFHYLFAAFSCLQGIFVLLF). Topologically, residues 2716–3034 (HCVAHREVRK…QANGSDSEKP (319 aa)) are cytoplasmic. The tract at residues 2774–3034 (TASLDSTTRD…QANGSDSEKP (261 aa)) is disordered. A phosphoserine mark is found at serine 2776, serine 2779, serine 2886, and serine 2888. Over residues 2893 to 2909 (TEPHLKVETKVSVELHR) the composition is skewed to basic and acidic residues. The segment covering 2976 to 2986 (SPTSSRTSSLG) has biased composition (low complexity). The span at 3003–3012 (PRREPGREHL) shows a compositional bias: basic and acidic residues. The span at 3020–3034 (RTGSAQANGSDSEKP) shows a compositional bias: polar residues.

It belongs to the G-protein coupled receptor 2 family. LN-TM7 subfamily. Post-translationally, the iron and 2-oxoglutarate dependent 3-hydroxylation of aspartate and asparagine is (R) stereospecific within EGF domains. As to expression, expressed in the brain, where it is localized principally in the ependymal cell layer, choroid plexus and the area postrema. Also found in spinal cord and in the eye.

Its subcellular location is the cell membrane. In terms of biological role, receptor that may have an important role in cell/cell signaling during nervous system formation. This is Cadherin EGF LAG seven-pass G-type receptor 1 (Celsr1) from Mus musculus (Mouse).